A 414-amino-acid chain; its full sequence is uncharacterized protein (414 aa).

This is an uncharacterized protein from Rickettsia conorii (strain ATCC VR-613 / Malish 7).